The sequence spans 309 residues: Olfactory receptor 2AP1 (309 aa).

At 1–23 (MKNKTVLTEFILLGLTDVPELQV) the chain is on the extracellular side. N3 carries N-linked (GlcNAc...) asparagine glycosylation. Residues 24–47 (AVFTFLFLAYLLSILGNLTILILT) form a helical membrane-spanning segment. Residues 48-55 (LLDSHLQT) are Cytoplasmic-facing. The chain crosses the membrane as a helical span at residues 56 to 77 (PMYFFLRNFSFLEISFTNIFIP). Over 78–98 (RVLISITTGNKSISFAGCFTQ) the chain is Extracellular. N87 carries N-linked (GlcNAc...) asparagine glycosylation. A disulfide bridge links C95 with C187. Residues 99–118 (YFFAMFLGATEFYLLAAMSY) form a helical membrane-spanning segment. At 119–137 (DRYVAICKPLHYTTIMSSR) the chain is on the cytoplasmic side. Residues 138–156 (ICIQLIFCSWLGGLMAIIP) traverse the membrane as a helical segment. At 157–193 (TITLMSQQDFCASNRLNHYFCDYEPLLELSCSDTSLI) the chain is on the extracellular side. A helical transmembrane segment spans residues 194–217 (EKVVFLVASVTLVVTLVLVILSYA). Residues 218–234 (FIIKTILKLPSAQQRTK) are Cytoplasmic-facing. Residues 235 to 257 (AFSTCSSHMIVISLSYGSCMFMY) form a helical membrane-spanning segment. Residues 258-270 (INPSAKEGDTFNK) are Extracellular-facing. The helical transmembrane segment at 271–290 (GVALLITSVAPLLNPFIYTL) threads the bilayer. Residues 291-309 (RNQQVKQPFKDMVKKLLNL) lie on the Cytoplasmic side of the membrane.

It belongs to the G-protein coupled receptor 1 family.

Its subcellular location is the cell membrane. Its function is as follows. Odorant receptor. In Homo sapiens (Human), this protein is Olfactory receptor 2AP1 (OR2AP1).